We begin with the raw amino-acid sequence, 246 residues long: MyoD family inhibitor domain-containing protein (246 aa).

Residues 1-71 (MSGAGEALAP…WGNPSDGELI (71 aa)) are disordered. Residues 33–43 (KCDKDNTEKDI) show a composition bias toward basic and acidic residues. A compositionally biased stretch (polar residues) spans 44–63 (TQATNSHFTHGEMQDQSIWG). The 173-residue stretch at 74–246 (QPQRLPQLQT…MECCGICFPS (173 aa)) folds into the MDFI domain. 3 positions are modified to phosphoserine: serine 128, serine 140, and serine 143.

It belongs to the MDFI family. In terms of assembly, interacts with HAND1; the interaction sequesters HAND1 into the nucleolus and inhibits its activity. Interacts (via C-terminus) with ZIC2. Interacts (via C-terminus) with AXIN1, the histidine-rich region of CCNT1/cyclin-T and weakly with LEF1. Interacts with CCNT2. Interacts with GATA2. Interacts (via C-terminus) with Piezo channel composed of PIEZO1 or PIEZO2; the interaction prolongs Piezo channel inactivation. (Microbial infection) Interacts (via C-terminus) with HIV-1 Tat and Rev. In terms of processing, palmitoylated. In terms of tissue distribution, expressed in lymphatic tissues. Detected in the spleen, thymus, peripheral blood leukocytes as well as prostate, uterus and small intestine. Expressed in lymphatic endothelial cells.

It localises to the nucleus. The protein localises to the nucleolus. The protein resides in the cytoplasm. It is found in the secreted. Its function is as follows. Required to control the activity of various transcription factors through their sequestration in the cytoplasm. Retains nuclear Zic proteins ZIC1, ZIC2 and ZIC3 in the cytoplasm and inhibits their transcriptional activation. Modulates the expression from cellular promoters. Binds to the axin complex, resulting in an increase in the level of free beta-catenin. Affects axin regulation of the WNT and JNK signaling pathways. Involved in the development of lymphatic vessel valves. Required to promote lymphatic endothelial cell migration, in a process that involves down-regulation of integrin beta 1 activation and control of cell adhesion to the extracellular matrix. Regulates the activity of mechanosensitive Piezo channel. Functionally, (Microbial infection) Modulates the expression from viral promoters. Down-regulates Tat-dependent transcription of the human immunodeficiency virus type 1 (HIV-1) LTR by interacting with HIV-1 Tat and Rev and impairing their nuclear import, probably by rendering the NLS domains inaccessible to importin-beta. Also stimulates activation of human T-cell leukemia virus type I (HTLV-I) LTR. In Homo sapiens (Human), this protein is MyoD family inhibitor domain-containing protein.